The chain runs to 274 residues: MGNLSVNQNKLQKRLRRLAGEAVTDFNMIEDGDKVMVCLSGGKDSYTMLDVLLYLQKVAPIRFEVVAVNMDQKQPGFPEHVLPEYLKSIGVEYHIIEKDTYSVVKEKIPEGKTTCSLCSRLRRGTLYTFADEIGATKMALGHHRDDILETFFLNMFYGGTLKAMPPKLLSDDGRNVVIRPLAYCSEADIEAYSKMKEFPIIPCNLCGSQENLQRQVVKEMLQEWERKSPGRTEIMFRALQNVVPSQLADRNLFDFKSLRIDDSATPRFVDVMSL.

A PP-loop motif motif is present at residues 40 to 45 (SGGKDS). [4Fe-4S] cluster is bound by residues cysteine 115, cysteine 118, and cysteine 206.

This sequence belongs to the TtcA family. As to quaternary structure, homodimer. Mg(2+) serves as cofactor. The cofactor is [4Fe-4S] cluster.

It is found in the cytoplasm. The enzyme catalyses cytidine(32) in tRNA + S-sulfanyl-L-cysteinyl-[cysteine desulfurase] + AH2 + ATP = 2-thiocytidine(32) in tRNA + L-cysteinyl-[cysteine desulfurase] + A + AMP + diphosphate + H(+). It functions in the pathway tRNA modification. Its function is as follows. Catalyzes the ATP-dependent 2-thiolation of cytidine in position 32 of tRNA, to form 2-thiocytidine (s(2)C32). The sulfur atoms are provided by the cysteine/cysteine desulfurase (IscS) system. This chain is tRNA-cytidine(32) 2-sulfurtransferase, found in Stutzerimonas stutzeri (strain A1501) (Pseudomonas stutzeri).